Here is a 770-residue protein sequence, read N- to C-terminus: Arf-GAP with coiled-coil, ANK repeat and PH domain-containing protein 2 (770 aa).

Residues 6–226 (DFEECLKDSP…MKDLGAQLDR (221 aa)) form the BAR domain. Residues 266–361 (GIVMEGYLFK…WIKAVQTSIA (96 aa)) enclose the PH domain. Positions 371 to 392 (SEKLDKKSSPSTGSLDSGSESK) are disordered. Residues 379-388 (SPSTGSLDSG) show a composition bias toward low complexity. Phosphoserine occurs at positions 384 and 387. The Arf-GAP domain occupies 399–520 (ESALQRVQCI…KFVDKYSTLL (122 aa)). The C4-type zinc-finger motif lies at 414-437 (CCDCGLADPRWASINLGITLCIEC). The residue at position 521 (S521) is a Phosphoserine. Over residues 548–561 (TPVKSNDSGIQQCS) the composition is skewed to polar residues. The segment at 548-571 (TPVKSNDSGIQQCSDDGRESLPST) is disordered. Phosphoserine is present on residues S573 and S576. ANK repeat units follow at residues 632–661 (NQATPLIQAVLGGSLVTCEFLLQNGANVNQ), 665–694 (QGRGPLHHATVLGHTGQVCLFLKRGANQHA), and 698–727 (EGKDPLSIAVEAANADIVTLLRLARMNEEM). Y734 is modified (phosphotyrosine). S767 carries the phosphoserine modification.

In terms of assembly, interacts with RAB35 (GTP-bound form); the interaction is direct and probably recruits ACAP2 to membranes. Interacts with MICALL1; the interaction is indirect through RAB35.

It is found in the endosome membrane. It localises to the cell membrane. With respect to regulation, GAP activity stimulated by phosphatidylinositol 4,5-bisphosphate (PIP2) and phosphatidic acid. Functionally, GTPase-activating protein (GAP) for ADP ribosylation factor 6 (ARF6). Doesn't show GAP activity for RAB35. This Rattus norvegicus (Rat) protein is Arf-GAP with coiled-coil, ANK repeat and PH domain-containing protein 2 (Acap2).